The sequence spans 208 residues: Guanylate kinase (208 aa).

The 182-residue stretch at Gly-4–Arg-185 folds into the Guanylate kinase-like domain. Ala-11–Ser-18 is an ATP binding site.

It belongs to the guanylate kinase family.

It is found in the cytoplasm. The catalysed reaction is GMP + ATP = GDP + ADP. In terms of biological role, essential for recycling GMP and indirectly, cGMP. The sequence is that of Guanylate kinase from Histophilus somni (strain 129Pt) (Haemophilus somnus).